The following is a 450-amino-acid chain: Phosphoglucosamine mutase (450 aa).

The Phosphoserine intermediate role is filled by Ser-100. Ser-100, Asp-240, Asp-242, and Asp-244 together coordinate Mg(2+). Position 100 is a phosphoserine (Ser-100).

This sequence belongs to the phosphohexose mutase family. Requires Mg(2+) as cofactor. Activated by phosphorylation.

It catalyses the reaction alpha-D-glucosamine 1-phosphate = D-glucosamine 6-phosphate. Functionally, catalyzes the conversion of glucosamine-6-phosphate to glucosamine-1-phosphate. The sequence is that of Phosphoglucosamine mutase from Desulforudis audaxviator (strain MP104C).